Consider the following 137-residue polypeptide: MRTLWIVALLLVGVEGSVLELGKMILQETGKNAITSYGSYGCNCGWGHRGQPKDATDRCCFVHKCCYKKLTDCNHKTDRYSYSWKNKAIICEEKNPCLKEMCECDKAVAICLRENLDTYNKKYKAYFKLKCKKPDTC.

Positions 1 to 16 (MRTLWIVALLLVGVEG) are cleaved as a signal peptide. Disulfide bonds link C42/C131, C44/C60, C59/C111, C65/C137, C66/C104, C73/C97, and C91/C102. Residues 121-133 (KKYKAYFKLKCKK) form an important for membrane-damaging activities in eukaryotes and bacteria; heparin-binding region.

This sequence belongs to the phospholipase A2 family. Group II subfamily. K49 sub-subfamily. As to quaternary structure, monomer. In terms of tissue distribution, expressed by the venom gland.

The protein resides in the secreted. In terms of biological role, snake venom phospholipase A2 (PLA2) that lacks enzymatic activity. Does not show antibacterial activity. Is myotoxic and displays edema-inducing activities. A model of myotoxic mechanism has been proposed: an apo Lys49-PLA2 is activated by the entrance of a hydrophobic molecule (e.g. fatty acid) at the hydrophobic channel of the protein leading to a reorientation of a monomer. This reorientation causes a transition between 'inactive' to 'active' states, causing alignment of C-terminal and membrane-docking sites (MDoS) side-by-side and putting the membrane-disruption sites (MDiS) in the same plane, exposed to solvent and in a symmetric position for both monomers. The MDoS region stabilizes the toxin on membrane by the interaction of charged residues with phospholipid head groups. Subsequently, the MDiS region destabilizes the membrane with penetration of hydrophobic residues. This insertion causes a disorganization of the membrane, allowing an uncontrolled influx of ions (i.e. calcium and sodium), and eventually triggering irreversible intracellular alterations and cell death. The sequence is that of Basic phospholipase A2 homolog APL-K49 from Agkistrodon piscivorus leucostoma (Western cottonmouth).